The primary structure comprises 525 residues: Eukaryotic translation initiation factor 3 subunit L (525 aa).

Over residues 1–19 (MYTQADEYDGGDAGYEDDY) the composition is skewed to acidic residues. Residues 1-21 (MYTQADEYDGGDAGYEDDYSG) are disordered. Residues 296–502 (DAIRCFSSVL…IHIADTKVDR (207 aa)) form the PCI domain.

Belongs to the eIF-3 subunit L family. In terms of assembly, component of the eukaryotic translation initiation factor 3 (eIF-3) complex.

The protein resides in the cytoplasm. Its function is as follows. Component of the eukaryotic translation initiation factor 3 (eIF-3) complex, which is involved in protein synthesis of a specialized repertoire of mRNAs and, together with other initiation factors, stimulates binding of mRNA and methionyl-tRNAi to the 40S ribosome. The eIF-3 complex specifically targets and initiates translation of a subset of mRNAs involved in cell proliferation. This chain is Eukaryotic translation initiation factor 3 subunit L, found in Nematostella vectensis (Starlet sea anemone).